A 462-amino-acid polypeptide reads, in one-letter code: Zinc finger CCCH domain-containing protein 8 (462 aa).

C3H1-type zinc fingers lie at residues 105–133 (RPGE…HPQW), 156–184 (QEGE…HPKE), 209–237 (RPSE…HPKD), 288–316 (RPGE…HPDR), 367–395 (RPGA…HPID), and 422–450 (REDA…HPPP).

This is Zinc finger CCCH domain-containing protein 8 from Oryza sativa subsp. japonica (Rice).